The primary structure comprises 667 residues: Transketolase (667 aa).

Residue His-27 participates in substrate binding. Thiamine diphosphate contacts are provided by residues His-67 and 115-117; that span reads GPL. Asp-156 contributes to the Mg(2+) binding site. Thiamine diphosphate contacts are provided by Gly-157 and Asn-186. Mg(2+)-binding residues include Asn-186 and Ile-188. His-262, Arg-357, and Ser-384 together coordinate substrate. Residue His-262 coordinates thiamine diphosphate. Catalysis depends on Glu-411, which acts as the Proton donor. Phe-437 lines the thiamine diphosphate pocket. 3 residues coordinate substrate: His-461, Asp-469, and Arg-520.

Belongs to the transketolase family. As to quaternary structure, homodimer. It depends on Mg(2+) as a cofactor. Ca(2+) is required as a cofactor. The cofactor is Mn(2+). Requires Co(2+) as cofactor. Thiamine diphosphate serves as cofactor.

The catalysed reaction is D-sedoheptulose 7-phosphate + D-glyceraldehyde 3-phosphate = aldehydo-D-ribose 5-phosphate + D-xylulose 5-phosphate. Catalyzes the transfer of a two-carbon ketol group from a ketose donor to an aldose acceptor, via a covalent intermediate with the cofactor thiamine pyrophosphate. The protein is Transketolase (tkt) of Bacillus subtilis (strain 168).